The sequence spans 544 residues: Pentatricopeptide repeat-containing protein At1g66345, mitochondrial (544 aa).

The N-terminal 116 residues, 1 to 116 (MASALRRLVE…RNLRHGIKSY (116 aa)), are a transit peptide targeting the mitochondrion. PPR repeat units lie at residues 163 to 197 (TPLV…GFTL), 198 to 232 (SVIT…RIYP), 233 to 267 (NEIT…RCLP), 268 to 302 (SVIV…NMVV), 303 to 337 (DTIG…GFSA), 338 to 372 (NSFV…GVSP), 373 to 407 (YDET…GLMP), 408 to 442 (SCSA…GFVP), 443 to 477 (DEHT…KMSP), 478 to 512 (GFEV…LIEP), and 513 to 544 (NADI…ISVR).

This sequence belongs to the PPR family. P subfamily.

It is found in the mitochondrion. This chain is Pentatricopeptide repeat-containing protein At1g66345, mitochondrial, found in Arabidopsis thaliana (Mouse-ear cress).